Here is a 556-residue protein sequence, read N- to C-terminus: MSKPETTAAPNFLRQIVQADLDAGKHAKIVTRFPPEPNGYLHIGHAKSICLNFGLAQEFAGDCHLRFDDTNPAKEDQEYIDAIEADIKWLGFQWSGEVCYASNYFDQLHAWAVELIKAGKAFVCDLGPEEMREYRGTLTEPGRNSPYRDRSVEENLDLFARMKAGEFPDGARSLRAKIDMGSPNMNLRDPILYRIRHAHHHQTGDKWCIYPSYDFTHGQSDAIEGITHSICTLEFEDHRPLYEWFLANLPVPAQPRQYEFSRLNLNYTVTSKRKLKQLVDEGHVSGWDDPRMSTLSGYRRRGYTPESIRNFCEMIGVNRASGVVDIGMLEFSIRDHLDATAPRAMCVLKPLKVVITNYPEGQVENLELPRHPKEDMGVRVLPFGRELFIDAGDFEEVPPAGYKRLIPGGEVRLRGSYVIRADEAIKDADGNIVELRCSYDPDTLGKNPEGRKVKGVIHWVPAEGSVECEVRLYDRLFRSANPEKAEEGGSFLDNINADSLQVLAGCRAEPSLGQANPEDRFQFEREGYFVADLKDSRPGKPVFNRTVTLRDSWGQG.

The 'HIGH' region motif lies at 35 to 45; the sequence is PEPNGYLHIGH. Residues 36-38 and 42-48 each bind ATP; these read EPN and HIGHAKS. Positions 68 and 213 each coordinate L-glutamine. Residues T232 and 262–263 each bind ATP; that span reads RL. Residues 269-273 carry the 'KMSKS' region motif; sequence VTSKR.

This sequence belongs to the class-I aminoacyl-tRNA synthetase family. Monomer.

It localises to the cytoplasm. The enzyme catalyses tRNA(Gln) + L-glutamine + ATP = L-glutaminyl-tRNA(Gln) + AMP + diphosphate. This chain is Glutamine--tRNA ligase, found in Pseudomonas aeruginosa (strain ATCC 15692 / DSM 22644 / CIP 104116 / JCM 14847 / LMG 12228 / 1C / PRS 101 / PAO1).